The primary structure comprises 466 residues: MSDEFDAVVGKVRARASPTDDERAQLQRVADAVMADAEAAIADLPVEAEVVQVGSTARGTWTAGDRDVDVFVCFPPSIDREALEEYGLAVGHDVLPDGREEYAEHPYVVGEREGYAVDLVPCYAVENATEIQSAVDRTPFHTRYLQERLDDNSAAEVRVAKQFLKGIGVYGSDLRTRGFSGYLTELLVLEFGGFRAFLEAVADWHPPVRLDPDDHGSETFDDPLVVIDPTDPERNVAAVLSETNVATLQHYARDLLAEPRVSLFTEDDPCPFEAADVEAAVSQRGTTPVALRFAAPDVVDDQLWPQLRKSLDGLCSELDRRGFEVLRSAAFVEDDSGKPETLDTESRGRDVVLLLEFAVAEQPAVERHEGPPVHVREHASGFFQKYDDNSEVAGPFIDGDRYVVERQRAFTTATGFLSSAAVYDVGLGQRIESALENGYEVLVGTDIAALADGFGVDLASYFDPKP.

Residues Ser55 and Arg58 each coordinate ATP. CTP is bound by residues Ser55 and Arg58. Residues Asp67, Asp69, and Asp118 each coordinate Mg(2+). The ATP site is built by His141, Lys161, and Tyr170. CTP-binding residues include His141, Lys161, and Tyr170.

The protein belongs to the tRNA nucleotidyltransferase/poly(A) polymerase family. Archaeal CCA-adding enzyme subfamily. In terms of assembly, homodimer. It depends on Mg(2+) as a cofactor.

The catalysed reaction is a tRNA precursor + 2 CTP + ATP = a tRNA with a 3' CCA end + 3 diphosphate. It catalyses the reaction a tRNA with a 3' CCA end + 2 CTP + ATP = a tRNA with a 3' CCACCA end + 3 diphosphate. Functionally, catalyzes the addition and repair of the essential 3'-terminal CCA sequence in tRNAs without using a nucleic acid template. Adds these three nucleotides in the order of C, C, and A to the tRNA nucleotide-73, using CTP and ATP as substrates and producing inorganic pyrophosphate. tRNA 3'-terminal CCA addition is required both for tRNA processing and repair. Also involved in tRNA surveillance by mediating tandem CCA addition to generate a CCACCA at the 3' terminus of unstable tRNAs. While stable tRNAs receive only 3'-terminal CCA, unstable tRNAs are marked with CCACCA and rapidly degraded. This is CCA-adding enzyme from Haloarcula marismortui (strain ATCC 43049 / DSM 3752 / JCM 8966 / VKM B-1809) (Halobacterium marismortui).